Consider the following 365-residue polypeptide: Spermine synthase (365 aa).

Alanine 2 carries the post-translational modification N-acetylalanine. Position 57 is a phosphoserine (serine 57). In terms of domain architecture, PABS spans 121 to 361 (RYWPTADGRL…ELWVFYTVWK (241 aa)). Glutamine 147 lines the S-adenosyl 3-(methylsulfanyl)propylamine pocket. The spermidine site is built by tyrosine 176 and aspartate 200. S-adenosyl 3-(methylsulfanyl)propylamine contacts are provided by residues glutamate 219 and 254–255 (DC). Aspartate 275 serves as the catalytic Proton acceptor. Residues tyrosine 350 and glutamate 352 each coordinate spermidine.

The protein belongs to the spermidine/spermine synthase family. Homodimer. Dimerization is mediated through the N-terminal domain and seems to be required for activity as deletion of the N-terminal domain causes complete loss of activity.

The catalysed reaction is S-adenosyl 3-(methylsulfanyl)propylamine + spermidine = spermine + S-methyl-5'-thioadenosine + H(+). It functions in the pathway amine and polyamine biosynthesis; spermine biosynthesis; spermine from spermidine: step 1/1. Catalyzes the production of spermine from spermidine and decarboxylated S-adenosylmethionine (dcSAM). In Bos taurus (Bovine), this protein is Spermine synthase (SMS).